A 266-amino-acid chain; its full sequence is Probable catechol O-methyltransferase 1 (266 aa).

7 residues coordinate S-adenosyl-L-methionine: Ile-56, Glu-78, Ser-86, Glu-106, Val-107, Ala-135, and Asp-162. Asp-162 lines the Mg(2+) pocket. Lys-165 is a binding site for substrate. Mg(2+) is bound by residues Asp-190 and Asn-191. Asn-191 lines the substrate pocket.

It belongs to the class I-like SAM-binding methyltransferase superfamily. Cation-dependent O-methyltransferase family. Mg(2+) is required as a cofactor.

It is found in the cytoplasm. Its subcellular location is the nucleus. The catalysed reaction is a catechol + S-adenosyl-L-methionine = a guaiacol + S-adenosyl-L-homocysteine + H(+). The chain is Probable catechol O-methyltransferase 1 from Schizosaccharomyces pombe (strain 972 / ATCC 24843) (Fission yeast).